The chain runs to 350 residues: Serine/threonine-protein kinase SRK2F (350 aa).

Residues 4-260 enclose the Protein kinase domain; it reads YDILRDLGSG…VPEIEKHPWF (257 aa). Residues 10–18 and Lys-33 each bind ATP; that span reads LGSGNFGVA. Catalysis depends on Asp-123, which acts as the Proton acceptor. Residues 270–303 adopt a coiled-coil conformation; that stretch reads EEEKCDNGVEEEEEEEEKCRQSVEEIVKIIEEAR.

The protein belongs to the protein kinase superfamily. Ser/Thr protein kinase family. Expressed in seedlings.

The enzyme catalyses L-seryl-[protein] + ATP = O-phospho-L-seryl-[protein] + ADP + H(+). It catalyses the reaction L-threonyl-[protein] + ATP = O-phospho-L-threonyl-[protein] + ADP + H(+). The chain is Serine/threonine-protein kinase SRK2F (SRK2F) from Arabidopsis thaliana (Mouse-ear cress).